The sequence spans 526 residues: Probable polyol transporter 4 (526 aa).

2 disordered regions span residues 1-21 (MMKN…AVSV) and 28-47 (YQRM…AEAR). The span at 29–47 (QRMDSDAEESQNHREAEAR) shows a compositional bias: basic and acidic residues. A run of 12 helical transmembrane segments spans residues 63-83 (SLNN…VLFI), 92-112 (VQTE…SLAG), 125-145 (MALA…APSF), 153-173 (TLAG…IAEI), 180-200 (GFFT…GYVS), 215-235 (IMLA…CVIP), 300-320 (MLIV…DATV), 340-360 (AATV…TFLI), 371-391 (VSTI…TFLG), 395-415 (LGIT…SIGM), 437-457 (ALGA…FLSV), and 465-485 (GTFF…YVLV).

It belongs to the major facilitator superfamily. Sugar transporter (TC 2.A.1.1) family.

It is found in the membrane. Its function is as follows. Plasma membrane sugar-proton symporter. The polypeptide is Probable polyol transporter 4 (PLT4) (Arabidopsis thaliana (Mouse-ear cress)).